The chain runs to 199 residues: Prolactin-1 (199 aa).

3 disulfides stabilise this stretch: cysteine 4/cysteine 11, cysteine 58/cysteine 174, and cysteine 191/cysteine 199. Asparagine 60 carries N-linked (GlcNAc...) asparagine glycosylation.

This sequence belongs to the somatotropin/prolactin family. In terms of processing, glycosylated.

The protein localises to the secreted. This is Prolactin-1 from Alligator mississippiensis (American alligator).